The primary structure comprises 331 residues: 5,10-methylenetetrahydromethanopterin reductase (331 aa).

It belongs to the mer family.

Its subcellular location is the cytoplasm. The catalysed reaction is 5-methyl-5,6,7,8-tetrahydromethanopterin + oxidized coenzyme F420-(gamma-L-Glu)(n) + H(+) = 5,10-methylenetetrahydromethanopterin + reduced coenzyme F420-(gamma-L-Glu)(n). It functions in the pathway one-carbon metabolism; methanogenesis from CO(2); methyl-coenzyme M from 5,10-methylene-5,6,7,8-tetrahydromethanopterin: step 1/2. In terms of biological role, catalyzes the reversible reduction of methylene-H(4)MPT to methyl-H(4)MPT. The protein is 5,10-methylenetetrahydromethanopterin reductase of Methanocaldococcus jannaschii (strain ATCC 43067 / DSM 2661 / JAL-1 / JCM 10045 / NBRC 100440) (Methanococcus jannaschii).